The chain runs to 165 residues: Protein NKG7 (165 aa).

4 consecutive transmembrane segments (helical) span residues 9 to 29, 61 to 81, 92 to 112, and 133 to 153; these read LLTS…NFWF, FCIL…MSCI, IVST…MTVY, and FYLG…SLGA.

It belongs to the PMP-22/EMP/MP20 family.

Its subcellular location is the cell membrane. It localises to the cytolytic granule membrane. Functionally, regulates cytotoxic granule exocytosis in effector lymphocytes, thus acting as a critical mediator of inflammation in a broad range of infectious and non-infectious diseases. Essential for cytotoxic degranulation of natural killer (NK) cells and CD8(+) T-cells and for the activation of CD4(+) T-cells following infection. Plays a critical role in CD8(+) T-cell and NK cell-mediated cytolysis of target cells and contributes to the cytolytic activity via the perforin/granzyme pathway by enhancing exocytosis of LAMP1-carrying lytic granules. Contributes to NK cell-mediated control of cancer metastasis. The protein is Protein NKG7 (NKG7) of Bos taurus (Bovine).